We begin with the raw amino-acid sequence, 207 residues long: Large ribosomal subunit protein bL25 (207 aa).

The disordered stretch occupies residues 185–207 (DLEEETGEAAAEAEAPAEEGAES).

Belongs to the bacterial ribosomal protein bL25 family. CTC subfamily. As to quaternary structure, part of the 50S ribosomal subunit; part of the 5S rRNA/L5/L18/L25 subcomplex. Contacts the 5S rRNA. Binds to the 5S rRNA independently of L5 and L18.

In terms of biological role, this is one of the proteins that binds to the 5S RNA in the ribosome where it forms part of the central protuberance. This is Large ribosomal subunit protein bL25 from Rhodococcus jostii (strain RHA1).